Reading from the N-terminus, the 461-residue chain is Putative cytochrome P450 132 (461 aa).

Cys409 provides a ligand contact to heme.

Belongs to the cytochrome P450 family. The cofactor is heme.

In Mycobacterium bovis (strain ATCC BAA-935 / AF2122/97), this protein is Putative cytochrome P450 132 (cyp132).